Here is a 296-residue protein sequence, read N- to C-terminus: Regulatory protein PchR (296 aa).

One can recognise an HTH araC/xylS-type domain in the interval 201–296 (HAARDLLVGA…RYGISPSEIR (96 aa)). DNA-binding regions (H-T-H motif) lie at residues 218–239 (DTLA…RKVF) and 266–288 (VSTV…RKRY).

Positive activator of the genes for pyochelin and ferripyochelin receptors. This Pseudomonas aeruginosa (strain ATCC 15692 / DSM 22644 / CIP 104116 / JCM 14847 / LMG 12228 / 1C / PRS 101 / PAO1) protein is Regulatory protein PchR (pchR).